A 229-amino-acid polypeptide reads, in one-letter code: Peptidase E (229 aa).

Active-site charge relay system residues include Ser-120, Asp-135, and His-157.

It belongs to the peptidase S51 family.

It is found in the cytoplasm. It catalyses the reaction Dipeptidase E catalyzes the hydrolysis of dipeptides Asp-|-Xaa. It does not act on peptides with N-terminal Glu, Asn or Gln, nor does it cleave isoaspartyl peptides.. Hydrolyzes dipeptides containing N-terminal aspartate residues. May play a role in allowing the cell to use peptide aspartate to spare carbon otherwise required for the synthesis of the aspartate family of amino acids. This chain is Peptidase E, found in Salmonella newport (strain SL254).